The primary structure comprises 468 residues: 3-isopropylmalate dehydratase large subunit (468 aa).

Cysteine 347, cysteine 407, and cysteine 410 together coordinate [4Fe-4S] cluster.

It belongs to the aconitase/IPM isomerase family. LeuC type 1 subfamily. Heterodimer of LeuC and LeuD. It depends on [4Fe-4S] cluster as a cofactor.

The catalysed reaction is (2R,3S)-3-isopropylmalate = (2S)-2-isopropylmalate. It participates in amino-acid biosynthesis; L-leucine biosynthesis; L-leucine from 3-methyl-2-oxobutanoate: step 2/4. In terms of biological role, catalyzes the isomerization between 2-isopropylmalate and 3-isopropylmalate, via the formation of 2-isopropylmaleate. This Synechococcus elongatus (strain ATCC 33912 / PCC 7942 / FACHB-805) (Anacystis nidulans R2) protein is 3-isopropylmalate dehydratase large subunit.